The primary structure comprises 202 residues: Putative pituitary tumor-transforming gene 3 protein (202 aa).

The short motif at 61-64 is the D-box element; sequence RKAL. Positions 163–173 match the SH3-binding motif; the sequence is PPSPLKMPSPP.

It belongs to the securin family.

It is found in the cytoplasm. Its subcellular location is the nucleus. The sequence is that of Putative pituitary tumor-transforming gene 3 protein (PTTG3) from Pan troglodytes (Chimpanzee).